Reading from the N-terminus, the 260-residue chain is Hydroxyacylglutathione hydrolase (260 aa).

Positions 61, 63, 65, 66, 119, 138, and 176 each coordinate Zn(2+).

Belongs to the metallo-beta-lactamase superfamily. Glyoxalase II family. As to quaternary structure, monomer. The cofactor is Zn(2+).

It catalyses the reaction an S-(2-hydroxyacyl)glutathione + H2O = a 2-hydroxy carboxylate + glutathione + H(+). The protein operates within secondary metabolite metabolism; methylglyoxal degradation; (R)-lactate from methylglyoxal: step 2/2. Functionally, thiolesterase that catalyzes the hydrolysis of S-D-lactoyl-glutathione to form glutathione and D-lactic acid. This chain is Hydroxyacylglutathione hydrolase, found in Brucella anthropi (strain ATCC 49188 / DSM 6882 / CCUG 24695 / JCM 21032 / LMG 3331 / NBRC 15819 / NCTC 12168 / Alc 37) (Ochrobactrum anthropi).